The sequence spans 296 residues: 4-diphosphocytidyl-2-C-methyl-D-erythritol kinase (296 aa).

The active site involves K11. 95 to 105 (PVAAGMAGGSS) provides a ligand contact to ATP. D137 is an active-site residue.

This sequence belongs to the GHMP kinase family. IspE subfamily.

It catalyses the reaction 4-CDP-2-C-methyl-D-erythritol + ATP = 4-CDP-2-C-methyl-D-erythritol 2-phosphate + ADP + H(+). It participates in isoprenoid biosynthesis; isopentenyl diphosphate biosynthesis via DXP pathway; isopentenyl diphosphate from 1-deoxy-D-xylulose 5-phosphate: step 3/6. In terms of biological role, catalyzes the phosphorylation of the position 2 hydroxy group of 4-diphosphocytidyl-2C-methyl-D-erythritol. This Clostridioides difficile (strain 630) (Peptoclostridium difficile) protein is 4-diphosphocytidyl-2-C-methyl-D-erythritol kinase.